A 551-amino-acid polypeptide reads, in one-letter code: Probable metalloreductase AIM14 (551 aa).

Transmembrane regions (helical) follow at residues 25 to 45 (GIII…VKFI), 67 to 87 (PTWM…GANI), 100 to 117 (RYGR…YLIL), 138 to 155 (KWLS…AIGY), 172 to 192 (FLNF…IVSI), 199 to 221 (YYSL…IIFH), and 225 to 247 (GVTI…LRFY). The Ferric oxidoreductase domain maps to 102–217 (GRIAYCLLPL…NITAWSMVVL (116 aa)). Positions 247–369 (YKSYPVNNLK…GGSGISFGLP (123 aa)) constitute an FAD-binding FR-type domain. The disordered stretch occupies residues 440 to 492 (QDESHAKVEQTQGEEEVDGLLNQDENGIPLQSMKKESFPKKEEGEDEEKSSKD). A compositionally biased stretch (basic and acidic residues) spans 472-492 (MKKESFPKKEEGEDEEKSSKD).

This sequence belongs to the ferric reductase (FRE) family. AIM14 subfamily.

It localises to the membrane. Its function is as follows. Probable cell surface metalloreductase. May be involved in iron or copper homeostasis. The polypeptide is Probable metalloreductase AIM14 (AIM14) (Candida tropicalis (strain ATCC MYA-3404 / T1) (Yeast)).